Consider the following 712-residue polypeptide: Polyribonucleotide nucleotidyltransferase (712 aa).

Residues D485 and D491 each coordinate Mg(2+). The KH domain maps to 552 to 615 (PRIHTIKINP…EAIRRIEAIT (64 aa)). The S1 motif domain occupies 621–689 (NRIYEGKVVR…RQGRVRLSIK (69 aa)).

The protein belongs to the polyribonucleotide nucleotidyltransferase family. In terms of assembly, component of the RNA degradosome, which is a multiprotein complex involved in RNA processing and mRNA degradation. It depends on Mg(2+) as a cofactor.

It is found in the cytoplasm. It catalyses the reaction RNA(n+1) + phosphate = RNA(n) + a ribonucleoside 5'-diphosphate. In terms of biological role, involved in mRNA degradation. Catalyzes the phosphorolysis of single-stranded polyribonucleotides processively in the 3'- to 5'-direction. In Aeromonas hydrophila subsp. hydrophila (strain ATCC 7966 / DSM 30187 / BCRC 13018 / CCUG 14551 / JCM 1027 / KCTC 2358 / NCIMB 9240 / NCTC 8049), this protein is Polyribonucleotide nucleotidyltransferase.